We begin with the raw amino-acid sequence, 236 residues long: Uridylate kinase (236 aa).

Position 10-13 (10-13) interacts with ATP; sequence KLSG. A UMP-binding site is contributed by G52. G53 and R57 together coordinate ATP. UMP is bound by residues D72 and 133–140; that span reads TGNPFFTT. The ATP site is built by T160, Y166, and D169.

The protein belongs to the UMP kinase family. In terms of assembly, homohexamer.

The protein resides in the cytoplasm. It catalyses the reaction UMP + ATP = UDP + ADP. The protein operates within pyrimidine metabolism; CTP biosynthesis via de novo pathway; UDP from UMP (UMPK route): step 1/1. Inhibited by UTP. Functionally, catalyzes the reversible phosphorylation of UMP to UDP. The polypeptide is Uridylate kinase (Cupriavidus metallidurans (strain ATCC 43123 / DSM 2839 / NBRC 102507 / CH34) (Ralstonia metallidurans)).